The primary structure comprises 117 residues: uncharacterized protein (117 aa).

It localises to the plastid. It is found in the chloroplast. This is an uncharacterized protein from Chlamydomonas reinhardtii (Chlamydomonas smithii).